Here is a 175-residue protein sequence, read N- to C-terminus: Endothelin-2 (175 aa).

Positions 1–21 (MVSAWCSIALALLLALHEGKG) are cleaved as a signal peptide. Residues 22 to 43 (QAAATLEQPASAPKGRGPHLRF) constitute a propeptide that is removed on maturation. 2 cysteine pairs are disulfide-bonded: C46-C60 and C48-C56. The propeptide occupies 67-175 (VNTAGQTAPY…IPAYSRWRKR (109 aa)). An endothelin-like region spans residues 93 to 108 (CECSTAGDSACATFCH).

It belongs to the endothelin/sarafotoxin family.

The protein resides in the secreted. Its function is as follows. Vasoconstrictor. The polypeptide is Endothelin-2 (Edn2) (Mus musculus (Mouse)).